Consider the following 92-residue polypeptide: Putative defensin-like protein 225 (92 aa).

The first 26 residues, 1-26 (MKYGVLFMVSCGVMFLILSHVEEVEA), serve as a signal peptide directing secretion. Cystine bridges form between cysteine 32–cysteine 92, cysteine 42–cysteine 70, and cysteine 68–cysteine 88.

Belongs to the DEFL family.

The protein localises to the secreted. This Arabidopsis thaliana (Mouse-ear cress) protein is Putative defensin-like protein 225 (SCRL1).